Reading from the N-terminus, the 353-residue chain is Ferredoxin--NADP reductase (353 aa).

Positions 25, 44, 52, 57, 97, 132, 298, and 339 each coordinate FAD.

It belongs to the ferredoxin--NADP reductase type 2 family. Homodimer. FAD is required as a cofactor.

It carries out the reaction 2 reduced [2Fe-2S]-[ferredoxin] + NADP(+) + H(+) = 2 oxidized [2Fe-2S]-[ferredoxin] + NADPH. This is Ferredoxin--NADP reductase from Chlorobium chlorochromatii (strain CaD3).